Reading from the N-terminus, the 301-residue chain is uncharacterized protein (301 aa).

The first 26 residues, 1–26 (MKGFSCSRPGYLTGLLLLAVAPILTA), serve as a signal peptide directing secretion. C27 carries the N-palmitoyl cysteine lipid modification. C27 carries the S-diacylglycerol cysteine lipid modification. One can recognise a TNase-like domain in the interval 46–243 (KLKPATIEYW…YNAKINIWSH (198 aa)). Positions 64 to 136 (NYASEERRKE…SKGDSTGDEK (73 aa)) are disordered. Basic and acidic residues-rich tracts occupy residues 67 to 95 (SEER…KTED) and 120 to 136 (TPEK…GDEK).

The protein resides in the cell membrane. This is an uncharacterized protein from Mycoplasma pneumoniae (strain ATCC 29342 / M129 / Subtype 1) (Mycoplasmoides pneumoniae).